Consider the following 531-residue polypeptide: Cytochrome c oxidase subunit 1 (531 aa).

The helical transmembrane segment at 18–38 (ILYLIYGMVSAMVATGMSVII) threads the bilayer. The Ca(2+) site is built by E41 and G46. Helical transmembrane passes span 59-79 (VLVT…ILIG), 103-123 (ISFW…LIET), 149-169 (AIFA…NFIV), 185-205 (PLFV…LPVL), 237-257 (LFYF…FGII), and 269-289 (IFGQ…GFLV). Residue H64 participates in Fe(II)-heme a binding. Position 243 (H243) interacts with Cu cation. The segment at residues 243–247 (HPEVY) is a cross-link (1'-histidyl-3'-tyrosine (His-Tyr)). An O2-binding site is contributed by Y247. 2 residues coordinate Cu cation: H292 and H293. A run of 2 helical transmembrane segments spans residues 312–332 (MVIA…LYGG) and 340–360 (MLFA…GVML). Mg(2+) contacts are provided by H370 and D371. H378 contacts heme a3. Fe(II)-heme a is bound at residue H380. Helical transmembrane passes span 385 to 405 (MGAL…MFGL) and 414 to 434 (VHYW…HFLG). Position 443 (P443) interacts with Ca(2+). A helical membrane pass occupies residues 458 to 478 (WGSIMSVISVLIGLYSVLVQL).

This sequence belongs to the heme-copper respiratory oxidase family. In terms of assembly, component of the cytochrome c oxidase (complex IV, CIV), a multisubunit enzyme composed of a catalytic core of 3 subunits and several supernumerary subunits. The complex exists as a monomer or a dimer and forms supercomplexes (SCs) in the inner mitochondrial membrane with ubiquinol-cytochrome c oxidoreductase (cytochrome b-c1 complex, complex III, CIII). Requires heme as cofactor. Cu cation is required as a cofactor.

It localises to the mitochondrion inner membrane. It catalyses the reaction 4 Fe(II)-[cytochrome c] + O2 + 8 H(+)(in) = 4 Fe(III)-[cytochrome c] + 2 H2O + 4 H(+)(out). It functions in the pathway energy metabolism; oxidative phosphorylation. Functionally, component of the cytochrome c oxidase, the last enzyme in the mitochondrial electron transport chain which drives oxidative phosphorylation. The respiratory chain contains 3 multisubunit complexes succinate dehydrogenase (complex II, CII), ubiquinol-cytochrome c oxidoreductase (cytochrome b-c1 complex, complex III, CIII) and cytochrome c oxidase (complex IV, CIV), that cooperate to transfer electrons derived from NADH and succinate to molecular oxygen, creating an electrochemical gradient over the inner membrane that drives transmembrane transport and the ATP synthase. Cytochrome c oxidase is the component of the respiratory chain that catalyzes the reduction of oxygen to water. Electrons originating from reduced cytochrome c in the intermembrane space (IMS) are transferred via the dinuclear copper A center (CU(A)) of subunit 2 and heme A of subunit 1 to the active site in subunit 1, a binuclear center (BNC) formed by heme A3 and copper B (CU(B)). The BNC reduces molecular oxygen to 2 water molecules using 4 electrons from cytochrome c in the IMS and 4 protons from the mitochondrial matrix. The sequence is that of Cytochrome c oxidase subunit 1 (COX1) from Candida albicans (strain SC5314 / ATCC MYA-2876) (Yeast).